The primary structure comprises 86 residues: Small ribosomal subunit protein bS18 (86 aa).

It belongs to the bacterial ribosomal protein bS18 family. As to quaternary structure, part of the 30S ribosomal subunit. Forms a tight heterodimer with protein bS6.

Binds as a heterodimer with protein bS6 to the central domain of the 16S rRNA, where it helps stabilize the platform of the 30S subunit. This Campylobacter lari (strain RM2100 / D67 / ATCC BAA-1060) protein is Small ribosomal subunit protein bS18.